Here is a 311-residue protein sequence, read N- to C-terminus: Class E basic helix-loop-helix protein 22 (311 aa).

The disordered stretch occupies residues 22–170; it reads AKRMESAFRS…GGSKKSKEQK (149 aa). A compositionally biased stretch (low complexity) spans 81–96; the sequence is GESASRSSVAESSGGE. The segment covering 125–147 has biased composition (gly residues); sequence AGGGGGGGGGGGGGPGGGGGGGL. In terms of domain architecture, bHLH spans 171-225; that stretch reads ALRLNINARERRRMHDLNDALDELRAVIPYAHSPSVRKLSKIATLLLAKNYILMQ.

It is found in the nucleus. Functionally, may act as a transcriptional repressor. The protein is Class E basic helix-loop-helix protein 22 (BHLHE22) of Gallus gallus (Chicken).